A 558-amino-acid chain; its full sequence is DEAD-box ATP-dependent RNA helicase 49 (558 aa).

The Q motif signature appears at 16–44 (FSELKPPLSEDIIEALDRSGFEVCTPVQA). A Helicase ATP-binding domain is found at 47 to 226 (IPFLCSHKDV…KAGLRNAMEV (180 aa)). 60-67 (AATGSGKT) provides a ligand contact to ATP. The DEAD box motif lies at 174 to 177 (DEAD). The Helicase C-terminal domain maps to 255–402 (QLVHLLIENK…ERKCSENASD (148 aa)). Residues 506–558 (KDKLQQEKRGKRKKSSKEAVDDSNKASRKRKLTGRQRQTIQTAQDEEEMNLRL) form a disordered region. Basic and acidic residues predominate over residues 521 to 530 (SKEAVDDSNK). A compositionally biased stretch (acidic residues) spans 549-558 (QDEEEMNLRL).

The protein belongs to the DEAD box helicase family. DDX55/SPB4 subfamily.

It carries out the reaction ATP + H2O = ADP + phosphate + H(+). The chain is DEAD-box ATP-dependent RNA helicase 49 (RH49) from Arabidopsis thaliana (Mouse-ear cress).